The sequence spans 454 residues: MYCRRSQLKKPSMSHRTHYYWIAHQGTPLHGVLSIPGDKSISHRAVMFAALADGTSRIDGFLEAEDTRSTAAILARLGVRIETPSFTQRIVHGVGVDGLQASDIALDCGNAGTGMRLLAGLLVAQPFDSVLVGDASLSKRPMRRVTDPLSQMGARIDTSDDGTPPLRIYGGQLLRGIDFISPVASAQIKSAVLLAGLYARNETVVREPHPTRDYTERMLTAFGVDIDVSTGCVRLRGGQRLCATNITIPADFSSAAFYLVAASVIPGSDITLRAVGLNPRRIGLLTVLRLMGADIVESNRHEQGGEPVADLRVRYASLQGTRVPEDLVPDMIDEFPALFVAAAAAEGQTVVSGAAELRVKESDRLAAMVTGLRVLGVQVDETADGATIHGGPIGHGTINSHGDHRIAMAFSIAGQLSVSTVRIEDVANVATSFPDYETLARSAGFGLEVYCDPA.

Positions 39, 40, and 44 each coordinate 3-phosphoshikimate. K39 provides a ligand contact to phosphoenolpyruvate. The phosphoenolpyruvate site is built by G112 and R140. 3-phosphoshikimate contacts are provided by S185, Q187, D333, and K360. Q187 provides a ligand contact to phosphoenolpyruvate. Residue D333 is the Proton acceptor of the active site. 2 residues coordinate phosphoenolpyruvate: R364 and R405.

It belongs to the EPSP synthase family. As to quaternary structure, monomer.

Its subcellular location is the cytoplasm. It catalyses the reaction 3-phosphoshikimate + phosphoenolpyruvate = 5-O-(1-carboxyvinyl)-3-phosphoshikimate + phosphate. The protein operates within metabolic intermediate biosynthesis; chorismate biosynthesis; chorismate from D-erythrose 4-phosphate and phosphoenolpyruvate: step 6/7. Its function is as follows. Catalyzes the transfer of the enolpyruvyl moiety of phosphoenolpyruvate (PEP) to the 5-hydroxyl of shikimate-3-phosphate (S3P) to produce enolpyruvyl shikimate-3-phosphate and inorganic phosphate. The sequence is that of 3-phosphoshikimate 1-carboxyvinyltransferase from Xylella fastidiosa (strain Temecula1 / ATCC 700964).